The sequence spans 140 residues: Small ribosomal subunit protein uS12 (140 aa).

The residue at position 103 (aspartate 103) is a 3-methylthioaspartic acid. The tract at residues 120 to 140 (GVQKRMQARSKYGAKRPKKGK) is disordered. Residues 125–140 (MQARSKYGAKRPKKGK) are compositionally biased toward basic residues.

This sequence belongs to the universal ribosomal protein uS12 family. As to quaternary structure, part of the 30S ribosomal subunit. Contacts proteins S8 and S17. May interact with IF1 in the 30S initiation complex.

With S4 and S5 plays an important role in translational accuracy. Functionally, interacts with and stabilizes bases of the 16S rRNA that are involved in tRNA selection in the A site and with the mRNA backbone. Located at the interface of the 30S and 50S subunits, it traverses the body of the 30S subunit contacting proteins on the other side and probably holding the rRNA structure together. The combined cluster of proteins S8, S12 and S17 appears to hold together the shoulder and platform of the 30S subunit. This chain is Small ribosomal subunit protein uS12, found in Desulfitobacterium hafniense (strain Y51).